The primary structure comprises 561 residues: DNA ligase B (561 aa).

The active-site N6-AMP-lysine intermediate is lysine 125.

This sequence belongs to the NAD-dependent DNA ligase family. LigB subfamily.

The enzyme catalyses NAD(+) + (deoxyribonucleotide)n-3'-hydroxyl + 5'-phospho-(deoxyribonucleotide)m = (deoxyribonucleotide)n+m + AMP + beta-nicotinamide D-nucleotide.. In terms of biological role, catalyzes the formation of phosphodiester linkages between 5'-phosphoryl and 3'-hydroxyl groups in double-stranded DNA using NAD as a coenzyme and as the energy source for the reaction. This chain is DNA ligase B, found in Salmonella heidelberg (strain SL476).